The following is a 180-amino-acid chain: Stathmin-3 (180 aa).

Residues cysteine 22 and cysteine 24 are each lipidated (S-palmitoyl cysteine). The SLD domain maps to 38–180 (GDMEVKQLDK…NKEQREEMSG (143 aa)). Phosphoserine occurs at positions 50, 60, 65, 68, 72, 73, and 81. The span at 60 to 74 (SPSDLSPESPVLSSP) shows a compositional bias: low complexity. Residues 60 to 81 (SPSDLSPESPVLSSPPKRKDAS) are disordered. The stretch at 75 to 179 (PKRKDASLEE…RNKEQREEMS (105 aa)) forms a coiled coil.

It belongs to the stathmin family. In terms of assembly, interacts with STAT3. Interacts with CLU (secreted form); this interaction may act as an important modulator during neuronal differentiation. In terms of processing, N-terminal palmitoylation promotes specific anchoring to the cytosolic leaflet of Golgi membranes and subsequent vesicular trafficking along dendrites and axons. Neuronal Stathmins are substrates for palmitoyltransferases ZDHHC3, ZDHHC7 and ZDHHC15. Neuron specific.

It is found in the golgi apparatus. Its subcellular location is the cell projection. It localises to the growth cone. The protein localises to the axon. The protein resides in the cytoplasm. It is found in the cytosol. Its function is as follows. Exhibits microtubule-destabilizing activity, which is antagonized by STAT3. The polypeptide is Stathmin-3 (Stmn3) (Mus musculus (Mouse)).